We begin with the raw amino-acid sequence, 427 residues long: Gamma-glutamyl phosphate reductase (427 aa).

The protein belongs to the gamma-glutamyl phosphate reductase family.

It is found in the cytoplasm. The catalysed reaction is L-glutamate 5-semialdehyde + phosphate + NADP(+) = L-glutamyl 5-phosphate + NADPH + H(+). The protein operates within amino-acid biosynthesis; L-proline biosynthesis; L-glutamate 5-semialdehyde from L-glutamate: step 2/2. In terms of biological role, catalyzes the NADPH-dependent reduction of L-glutamate 5-phosphate into L-glutamate 5-semialdehyde and phosphate. The product spontaneously undergoes cyclization to form 1-pyrroline-5-carboxylate. This is Gamma-glutamyl phosphate reductase from Gluconobacter oxydans (strain 621H) (Gluconobacter suboxydans).